The following is a 90-amino-acid chain: NELL2-interacting cell ontogeny regulator 1 (90 aa).

Positions 1–28 (MAPALRSLLSPRTLLLLLLSLALLGARA) are cleaved as a signal peptide.

It belongs to the NICOL family. Interacts with NELL2; triggers epididymal differentiation. Interacts with cell surface receptor TFRC; the interaction mediates uptake of NICOL1 into fibroblasts. In terms of tissue distribution, expression is enriched in both male and female reproductive organs, including the testis, epididymis, seminal vesicles, coagulating glands, ovary and uterus, and in various non-reproductive organs such as brain, thymus and liver. In testis, expressed in both germ cells and Sertoli cells. Also expressed at low levels in the kidney. Expressed during neocortex and cerebellum development.

The protein localises to the secreted. It is found in the cytoplasm. It localises to the perinuclear region. Functionally, mRNA-binding protein which interacts with a range of target mRNAs including SERPINE1, ACTA2, CCN2 and COL4A1 and may promote extracellular matrix production. Binds to the 3'-UTR of SERPINE1 mRNA and stabilizes the mRNA, possibly by competing for binding with SERBP1 and preventing SERBP1-mediated mRNA degradation. Also binds to the 3'-UTR of ACTA2. Testis-derived lumicrine factor that triggers epididymal differentiation and sperm maturation. In Mus musculus (Mouse), this protein is NELL2-interacting cell ontogeny regulator 1.